A 475-amino-acid chain; its full sequence is Aspartyl/glutamyl-tRNA(Asn/Gln) amidotransferase subunit B (475 aa).

Belongs to the GatB/GatE family. GatB subfamily. Heterotrimer of A, B and C subunits.

It carries out the reaction L-glutamyl-tRNA(Gln) + L-glutamine + ATP + H2O = L-glutaminyl-tRNA(Gln) + L-glutamate + ADP + phosphate + H(+). The catalysed reaction is L-aspartyl-tRNA(Asn) + L-glutamine + ATP + H2O = L-asparaginyl-tRNA(Asn) + L-glutamate + ADP + phosphate + 2 H(+). Functionally, allows the formation of correctly charged Asn-tRNA(Asn) or Gln-tRNA(Gln) through the transamidation of misacylated Asp-tRNA(Asn) or Glu-tRNA(Gln) in organisms which lack either or both of asparaginyl-tRNA or glutaminyl-tRNA synthetases. The reaction takes place in the presence of glutamine and ATP through an activated phospho-Asp-tRNA(Asn) or phospho-Glu-tRNA(Gln). This chain is Aspartyl/glutamyl-tRNA(Asn/Gln) amidotransferase subunit B, found in Bacillus mycoides (strain KBAB4) (Bacillus weihenstephanensis).